Here is a 670-residue protein sequence, read N- to C-terminus: C6 finger domain transcription factor iacK (670 aa).

Positions Met1–Val84 are disordered. The span at Gly44–Thr54 shows a compositional bias: pro residues. Positions Ala55–Thr74 are enriched in low complexity. The segment at residues Cys88 to Cys114 is a DNA-binding region (zn(2)-C6 fungal-type). A disordered region spans residues Gly122–Pro157. Low complexity predominate over residues Ser142 to Ser155.

It is found in the nucleus. Its function is as follows. Transcription factor; part of the gene cluster that mediates the biosynthesis of iso-A82775C, a enylepoxycyclohexane and biosynthetic precursor of the chloropestolide anticancer natural products. This chain is C6 finger domain transcription factor iacK, found in Pestalotiopsis fici (strain W106-1 / CGMCC3.15140).